Here is a 401-residue protein sequence, read N- to C-terminus: Argininosuccinate synthase (401 aa).

9 to 17 (AYSGGLDTS) is an ATP binding site. Tyrosine 86 is a binding site for L-citrulline. Glycine 116 contacts ATP. 3 residues coordinate L-aspartate: threonine 118, asparagine 122, and aspartate 123. Residue asparagine 122 coordinates L-citrulline. L-citrulline is bound by residues arginine 126, serine 174, serine 183, glutamate 259, and tyrosine 271.

The protein belongs to the argininosuccinate synthase family. Type 1 subfamily. Homotetramer.

It is found in the cytoplasm. It catalyses the reaction L-citrulline + L-aspartate + ATP = 2-(N(omega)-L-arginino)succinate + AMP + diphosphate + H(+). Its pathway is amino-acid biosynthesis; L-arginine biosynthesis; L-arginine from L-ornithine and carbamoyl phosphate: step 2/3. In Bacillus cereus (strain AH187), this protein is Argininosuccinate synthase.